Here is a 226-residue protein sequence, read N- to C-terminus: Ribose-5-phosphate isomerase A (226 aa).

Substrate is bound by residues 33–36 (TGST), 86–89 (DGAD), and 99–102 (KGGG). The active-site Proton acceptor is glutamate 108. Residue lysine 126 coordinates substrate.

This sequence belongs to the ribose 5-phosphate isomerase family. Homodimer.

It carries out the reaction aldehydo-D-ribose 5-phosphate = D-ribulose 5-phosphate. It participates in carbohydrate degradation; pentose phosphate pathway; D-ribose 5-phosphate from D-ribulose 5-phosphate (non-oxidative stage): step 1/1. Catalyzes the reversible conversion of ribose-5-phosphate to ribulose 5-phosphate. This is Ribose-5-phosphate isomerase A from Bordetella pertussis (strain Tohama I / ATCC BAA-589 / NCTC 13251).